A 395-amino-acid polypeptide reads, in one-letter code: Elongation factor Tu (395 aa).

The tr-type G domain maps to 10-204 (KPHVNIGTIG…NVDEYIPLPQ (195 aa)). The tract at residues 19-26 (GHVDHGKT) is G1. 19–26 (GHVDHGKT) provides a ligand contact to GTP. Thr-26 serves as a coordination point for Mg(2+). The interval 60-64 (GITIN) is G2. The tract at residues 81–84 (DCPG) is G3. Residues 81 to 85 (DCPGH) and 136 to 139 (NKVD) contribute to the GTP site. Positions 136-139 (NKVD) are G4. Residues 174–176 (SAL) are G5.

This sequence belongs to the TRAFAC class translation factor GTPase superfamily. Classic translation factor GTPase family. EF-Tu/EF-1A subfamily. Monomer.

The protein localises to the cytoplasm. The catalysed reaction is GTP + H2O = GDP + phosphate + H(+). Its function is as follows. GTP hydrolase that promotes the GTP-dependent binding of aminoacyl-tRNA to the A-site of ribosomes during protein biosynthesis. The polypeptide is Elongation factor Tu (Amoebophilus asiaticus (strain 5a2)).